Consider the following 596-residue polypeptide: uncharacterized protein (596 aa).

A Helicase ATP-binding domain is found at 44-203 (KYLASQPRDF…PFVTYALDAD (160 aa)). The Helicase C-terminal domain maps to 285 to 432 (RLRQLRTHVP…PHRESTDNPL (148 aa)). Disordered regions lie at residues 420-444 (LGKP…QTEQ) and 506-533 (EQLQ…SVHG). Positions 510-523 (KRTAAQQASSTPDR) are enriched in polar residues.

The protein to M.tuberculosis Rv2917.

This is an uncharacterized protein from Mycobacterium leprae (strain TN).